The sequence spans 318 residues: Ankyrin repeat and SOCS box protein 7 (318 aa).

ANK repeat units lie at residues 13 to 42 (QEELQIQAAVAAGDVHTVRKMLEQGYSPNG), 46 to 75 (NGWTLLHFSAARGKERCVRVFLEHGADPTV), 80 to 109 (GGFTALHYAAMHGRARIARLMLESEYRSDI), 116 to 145 (DGWTPLHVAAHYGRDSFVRLLLEFKAEVDP), 149 to 178 (KGTTPLQLAIIRERSSCVKILLDHNANIDI), 180 to 208 (NGFLLRYAVIKSNHSYCRMFLQRGADTDL), and 213 to 242 (DGQTPLHLSALRDDVLCARMLYNYGADTNT). In terms of domain architecture, SOCS box spans 265–318 (LDFLQEVTRQPRNLQDLCRIKIRQCIGLQNLKLLDELPIAKVMKDYLKHKFDDI).

Belongs to the ankyrin SOCS box (ASB) family. As to quaternary structure, interacts with CUL5. Interacts with RNF7. Interacts with PSRC1.

Its pathway is protein modification; protein ubiquitination. Probable substrate-recognition component of a SCF-like ECS (Elongin-Cullin-SOCS-box protein) E3 ubiquitin-protein ligase complex which mediates the ubiquitination and subsequent proteasomal degradation of target proteins. Plays a role in spindle dynamics and genome integrity by targeting the mitotic progression protein PSRC1 for proteasomal degradation in a cell cycle-dependent manner. Also participates in meiosis by mediating the proper attachment between kinetochores and microtubules. In Macaca fascicularis (Crab-eating macaque), this protein is Ankyrin repeat and SOCS box protein 7 (ASB7).